The following is a 179-amino-acid chain: B-cell acute lymphoblastic leukemia-expressed protein (179 aa).

2 disordered regions span residues 1–20 (MMKD…TDLQ) and 65–86 (RDTP…RGKA). The segment covering 10 to 20 (SWASEESTDLQ) has biased composition (polar residues).

This chain is B-cell acute lymphoblastic leukemia-expressed protein (BLACE), found in Homo sapiens (Human).